The sequence spans 353 residues: UDP-N-acetylglucosamine--N-acetylmuramyl-(pentapeptide) pyrophosphoryl-undecaprenol N-acetylglucosamine transferase (353 aa).

UDP-N-acetyl-alpha-D-glucosamine-binding positions include 14 to 16, Asn126, Arg162, Ser190, Ile243, 262 to 267, and Gln287; these read TGG and ALTVSE.

This sequence belongs to the glycosyltransferase 28 family. MurG subfamily.

It localises to the cell inner membrane. The enzyme catalyses di-trans,octa-cis-undecaprenyl diphospho-N-acetyl-alpha-D-muramoyl-L-alanyl-D-glutamyl-meso-2,6-diaminopimeloyl-D-alanyl-D-alanine + UDP-N-acetyl-alpha-D-glucosamine = di-trans,octa-cis-undecaprenyl diphospho-[N-acetyl-alpha-D-glucosaminyl-(1-&gt;4)]-N-acetyl-alpha-D-muramoyl-L-alanyl-D-glutamyl-meso-2,6-diaminopimeloyl-D-alanyl-D-alanine + UDP + H(+). The protein operates within cell wall biogenesis; peptidoglycan biosynthesis. Functionally, cell wall formation. Catalyzes the transfer of a GlcNAc subunit on undecaprenyl-pyrophosphoryl-MurNAc-pentapeptide (lipid intermediate I) to form undecaprenyl-pyrophosphoryl-MurNAc-(pentapeptide)GlcNAc (lipid intermediate II). This chain is UDP-N-acetylglucosamine--N-acetylmuramyl-(pentapeptide) pyrophosphoryl-undecaprenol N-acetylglucosamine transferase, found in Vibrio atlanticus (strain LGP32) (Vibrio splendidus (strain Mel32)).